The primary structure comprises 971 residues: Polyamine-modulated factor 1-binding protein 1 (971 aa).

Coiled-coil stretches lie at residues 37–69 (NKQY…LQAS), 117–229 (EKLH…ACSN), 282–325 (LHVE…LREE), 355–680 (QKLS…SAIQ), 706–827 (QDDL…DEKE), and 879–916 (IAKL…KAGT).

In terms of tissue distribution, expressed in testis and more specifically in ODF, the sperm tail specific cytoskeletal structure. Also expressed in epididymides and brain.

The protein resides in the cell projection. The protein localises to the cilium. It localises to the flagellum. Its function is as follows. Required for normal spermatogenesis. It functions as a scaffold protein that attaches the sperm head-tail connecting piece to the nuclear envelope, thus maintaining sperm head and tail integrity. May also be involved in the general organization of cellular cytoskeleton. The chain is Polyamine-modulated factor 1-binding protein 1 (Pmfbp1) from Rattus norvegicus (Rat).